Here is a 297-residue protein sequence, read N- to C-terminus: HTH-type transcriptional regulator ArgP (297 aa).

Positions 4–60 (PDYRTLQALDAVIRERGFERAAQKLCITQSAVSQRIKQLENMFGQPLLVRTVPPRPT) constitute an HTH lysR-type domain. Residues 21 to 40 (FERAAQKLCITQSAVSQRIK) constitute a DNA-binding region (H-T-H motif).

The protein belongs to the LysR transcriptional regulatory family. In terms of assembly, homodimer.

In terms of biological role, controls the transcription of genes involved in arginine and lysine metabolism. The polypeptide is HTH-type transcriptional regulator ArgP (Escherichia coli O127:H6 (strain E2348/69 / EPEC)).